Here is a 520-residue protein sequence, read N- to C-terminus: Maturase K (520 aa).

This sequence belongs to the intron maturase 2 family. MatK subfamily.

The protein resides in the plastid. The protein localises to the chloroplast. Functionally, usually encoded in the trnK tRNA gene intron. Probably assists in splicing its own and other chloroplast group II introns. The protein is Maturase K of Linum perenne (Perennial flax).